Consider the following 103-residue polypeptide: Large ribosomal subunit protein bL21 (103 aa).

Belongs to the bacterial ribosomal protein bL21 family. Part of the 50S ribosomal subunit. Contacts protein L20.

This protein binds to 23S rRNA in the presence of protein L20. The chain is Large ribosomal subunit protein bL21 from Vesicomyosocius okutanii subsp. Calyptogena okutanii (strain HA).